Reading from the N-terminus, the 375-residue chain is Protein abhd-3.2 (375 aa).

The 96-residue stretch at 108-203 (PIVVFLPGIT…ILWNYLAMTG (96 aa)) folds into the AB hydrolase-1 domain. Active-site charge relay system residues include Ser-189, Asp-315, and His-344.

The protein belongs to the AB hydrolase superfamily. AB hydrolase 4 family.

The chain is Protein abhd-3.2 from Caenorhabditis elegans.